Here is an 83-residue protein sequence, read N- to C-terminus: Mu-theraphotoxin-Hhn2k (83 aa).

The first 21 residues, 1 to 21 (MKASMFLALAGLVLLFVVDYA), serve as a signal peptide directing secretion. The propeptide occupies 22–48 (SESEEKEFPIELLSKIFAVDVFKGEER). Intrachain disulfides connect Cys-50/Cys-65, Cys-57/Cys-70, and Cys-64/Cys-77. Leu-81 is subject to Leucine amide.

It belongs to the neurotoxin 10 (Hwtx-1) family. 15 (Hntx-3) subfamily. In terms of assembly, monomer. In terms of tissue distribution, expressed by the venom gland.

It localises to the secreted. Lethal neurotoxin. Selectively blocks tetrodotoxin-sensitive voltage-gated sodium channels (Nav). Does not affect tetrodotoxin-resistant voltage-gated sodium channels or calcium channels. The sequence is that of Mu-theraphotoxin-Hhn2k from Cyriopagopus hainanus (Chinese bird spider).